The following is a 315-amino-acid chain: Methylglutaconyl-CoA hydratase, mitochondrial (315 aa).

The transit peptide at 1–43 directs the protein to the mitochondrion; it reads MAAAAAPGALGALSAGRVRLVAACCARLGSAAWARGTAPRRGY. Lysine 76 bears the N6-acetyllysine; alternate mark. Position 76 is an N6-succinyllysine; alternate (lysine 76). Positions 81 to 95 are RNA-binding; the sequence is KNLLKMLSKAVDALK. Lysine 85 bears the N6-succinyllysine mark. N6-acetyllysine; alternate is present on residues lysine 89 and lysine 120. An N6-succinyllysine; alternate mark is found at lysine 89 and lysine 120. N6-succinyllysine is present on residues lysine 124 and lysine 136. N6-acetyllysine; alternate occurs at positions 180 and 187. N6-succinyllysine; alternate occurs at positions 180 and 187. Residue lysine 305 is modified to N6-succinyllysine.

This sequence belongs to the enoyl-CoA hydratase/isomerase family. In terms of assembly, homohexamer.

The protein resides in the mitochondrion. It carries out the reaction (3S)-3-hydroxy-3-methylglutaryl-CoA = 3-methyl-(2E)-glutaconyl-CoA + H2O. The enzyme catalyses (3S)-citramalyl-CoA = itaconyl-CoA + H2O. It catalyses the reaction 3-hydroxyisovaleryl-CoA = 3-methylbut-2-enoyl-CoA + H2O. The catalysed reaction is (S)-3-hydroxyglutaryl-CoA = (2E)-glutaconyl-CoA + H2O. It participates in amino-acid degradation; L-leucine degradation; (S)-3-hydroxy-3-methylglutaryl-CoA from 3-isovaleryl-CoA: step 3/3. Functionally, catalyzes the fifth step in the leucine degradation pathway, the reversible hydration of 3-methylglutaconyl-CoA (3-MG-CoA) to 3-hydroxy-3-methylglutaryl-CoA (HMG-CoA). Can catalyze the reverse reaction but at a much lower rate in vitro. HMG-CoA is then quickly degraded by another enzyme (such as HMG-CoA lyase) to give acetyl-CoA and acetoacetate. Uses other substrates such as (2E)-glutaconyl-CoA efficiently in vitro, and to a lesser extent 3-methylcrotonyl-CoA (3-methyl-(2E)-butenoyl-CoA), crotonyl-CoA ((2E)-butenoyl-CoA) and 3-hydroxybutanoyl-CoA (the missing carboxylate reduces affinity to the active site). Originally it was identified as an RNA-binding protein as it binds to AU-rich elements (AREs) in vitro. AREs direct rapid RNA degradation and mRNA deadenylation. Might have itaconyl-CoA hydratase activity, converting itaconyl-CoA into citramalyl-CoA in the C5-dicarboxylate catabolism pathway. The C5-dicarboxylate catabolism pathway is required to detoxify itaconate, an antimicrobial metabolite and immunomodulator produced by macrophages during certain infections, that can act as a vitamin B12-poisoning metabolite. This is Methylglutaconyl-CoA hydratase, mitochondrial from Rattus norvegicus (Rat).